The following is a 431-amino-acid chain: Keratin, type I cytoskeletal 40 (431 aa).

Residues 1–89 (MTSDCSSTHC…CEDGVFTSNE (89 aa)) form a head region. Residues 89–400 (EKETMQFLND…GLLDSEDSRL (312 aa)) form the IF rod domain. The tract at residues 90-124 (KETMQFLNDRLASYLEKVRSLEETNAELESRIQEQ) is coil 1A. Residues 125-135 (CEQDIPMVCPD) are linker 1. The segment at 136–236 (YQRYFNTIED…HEEEVNLLRE (101 aa)) is coil 1B. The interval 237-252 (QLGDRLSVELDTAPTL) is linker 12. Residues 253 to 396 (DLNRVLDEMR…NTYWGLLDSE (144 aa)) are coil 2. The interval 397-431 (DSRLSCSPCSTTCTSSNTCEPCSAYVICTVENCCL) is tail.

The protein belongs to the intermediate filament family. As to quaternary structure, heterotetramer of two type I and two type II keratins. Expressed in skin and scalp. Also very weakly expressed in tongue, breast, colon and small intestine. In the hair follicle, it is specifically present in the upper hair cuticle. Not present in the upper cortex (at protein level).

Its function is as follows. May play a role in late hair differentiation. The polypeptide is Keratin, type I cytoskeletal 40 (KRT40) (Homo sapiens (Human)).